Reading from the N-terminus, the 342-residue chain is Putative ABC transporter anion-binding protein HVO_1888 (342 aa).

The tat-type signal signal peptide spans 1 to 32 (MAIERRRFLQAAGVGAVLGLSGCTGNTSPPQA). A compositionally biased stretch (polar residues) spans 24-37 (TGNTSPPQANNETA). Positions 24 to 52 (TGNTSPPQANNETAEGSGGSESGDGSTQE) are disordered.

The complex is composed of two ATP-binding proteins (HVO_1886), two transmembrane proteins (HVO_1887) and a solute-binding protein (HVO_1888). Predicted to be exported by the Tat system. The position of the signal peptide cleavage has not been experimentally proven.

Its function is as follows. Part of an ABC transporter complex involved in anions import. In Haloferax volcanii (strain ATCC 29605 / DSM 3757 / JCM 8879 / NBRC 14742 / NCIMB 2012 / VKM B-1768 / DS2) (Halobacterium volcanii), this protein is Putative ABC transporter anion-binding protein HVO_1888.